The following is a 530-amino-acid chain: Ubiquitin carboxyl-terminal hydrolase 17-like protein 24 (530 aa).

A USP domain is found at 80–375 (AGLQNMGNTC…QAYVLFYIQK (296 aa)). Residue cysteine 89 is the Nucleophile of the active site. The active-site Proton acceptor is the histidine 334. Basic and acidic residues-rich tracts occupy residues 382 to 392 (SESVSRGREPR) and 398 to 412 (DTDRRATQGELKRDH). 2 disordered regions span residues 382 to 412 (SESVSRGREPRALGAEDTDRRATQGELKRDH) and 477 to 530 (NHHP…LVCQ). Polar residues predominate over residues 493 to 505 (TPTHQESMNTGTL). Positions 510–524 (GRARRSKGKNKHSKR) are enriched in basic residues.

This sequence belongs to the peptidase C19 family. USP17 subfamily. In terms of tissue distribution, expressed in heart, brain, liver and skeletal muscle.

It localises to the nucleus. The protein resides in the nucleolus. Its subcellular location is the endoplasmic reticulum. It carries out the reaction Thiol-dependent hydrolysis of ester, thioester, amide, peptide and isopeptide bonds formed by the C-terminal Gly of ubiquitin (a 76-residue protein attached to proteins as an intracellular targeting signal).. Deubiquitinating enzyme that removes conjugated ubiquitin from specific proteins to regulate different cellular processes that may include cell proliferation, progression through the cell cycle, apoptosis, cell migration, and the cellular response to viral infection. The polypeptide is Ubiquitin carboxyl-terminal hydrolase 17-like protein 24 (USP17L24) (Homo sapiens (Human)).